The primary structure comprises 453 residues: Na(+)/H(+) antiporter NhaA 2 (453 aa).

The next 11 membrane-spanning stretches (helical) occupy residues 32-52 (GALLLAGAVIALIWANSPGAA), 71-91 (LSLAAWAKDGLLAVFFFVAGL), 109-129 (AVPIAAAVGGVLAPAAVYVLI), 140-160 (GWAIPAATDIAFALAVLAVIG), 169-189 (VFLLTLAVVDDLIAIMIIAVF), 193-213 (NLSVTPLLATALPLVAFAILL), 232-252 (ALVHASGVHATVAGVLLALVV), 284-304 (AVPVFALMSAGVAIGGLGGLV), 310-330 (PVAIGVIAGLVIGKPLGVIAV), 356-376 (MLAGIGFTVSLLIGELSFAAG), and 382-402 (HVKIAIVTGSLIAAVLAAVIL). Residues 409–453 (GSRGNDATTRDPDQTRVGTATQRTTPDHPTPAATDANQPARSPAP) are disordered.

Belongs to the NhaA Na(+)/H(+) (TC 2.A.33) antiporter family.

Its subcellular location is the cell membrane. It catalyses the reaction Na(+)(in) + 2 H(+)(out) = Na(+)(out) + 2 H(+)(in). Functionally, na(+)/H(+) antiporter that extrudes sodium in exchange for external protons. The protein is Na(+)/H(+) antiporter NhaA 2 of Salinispora tropica (strain ATCC BAA-916 / DSM 44818 / JCM 13857 / NBRC 105044 / CNB-440).